Consider the following 177-residue polypeptide: Peptide deformylase (177 aa).

Fe cation-binding residues include Cys99 and His141. Glu142 is a catalytic residue. His145 contacts Fe cation.

Belongs to the polypeptide deformylase family. It depends on Fe(2+) as a cofactor.

It carries out the reaction N-terminal N-formyl-L-methionyl-[peptide] + H2O = N-terminal L-methionyl-[peptide] + formate. Removes the formyl group from the N-terminal Met of newly synthesized proteins. Requires at least a dipeptide for an efficient rate of reaction. N-terminal L-methionine is a prerequisite for activity but the enzyme has broad specificity at other positions. The chain is Peptide deformylase from Rhizorhabdus wittichii (strain DSM 6014 / CCUG 31198 / JCM 15750 / NBRC 105917 / EY 4224 / RW1) (Sphingomonas wittichii).